The following is a 567-amino-acid chain: MSTQILATSFKNDNIHKIVRPTTNYHPSIWGDRFLHYDIPKEELNYKQGQVEELKEVVRKEIFGEFLCDDWSNRLKLIDVVQRLGLSYHFESEIQNELQHIYNKISINDSNFEHETLHDASIRFRLLRQHGYRVSLDIFDKFKDENGNFKECLASDTVGLLSLYEASHLSCVGENLLDEALSFTTKHLTEFLENNKKEHPNDDPLSKEISRALERPLRKTLVNLHARYFISIYEKDASHNKVLLQLAKLDFNLLQSMHKKELSEISRWWKELDSAHNFPFARNRIVELYIWILGVYYEPQYSFARNILVKIIALSSIADDIYDSYGIFEEHKLLIEAIDRWDKNCMDKLHPEYLQKYYKILLQSFEEFEQEFEKEETYKVYYGKETFKRLLRGYFEEARWLNEGYMPSLEEHLKVSLVTSGYFMLMACSLVGMKSNNIVTKQVFEWLSKDPKIVRASASVCRYMDDVAGHKNEQERNHIPSTIECYMKQYGVSEEEACDEMNRRVVIAWKEINEEFLKPTEAASPILVRALNLARVMDLLYKNGDNYTQVGKVTKDSVAVLLIDPIP.

(2E,6E)-farnesyl diphosphate contacts are provided by arginine 282, aspartate 319, aspartate 323, arginine 462, and aspartate 465. Aspartate 319 and aspartate 323 together coordinate Mg(2+). The DDXXD motif signature appears at 319–323 (DDIYD). The Mg(2+) site is built by aspartate 465 and glutamate 473.

This sequence belongs to the terpene synthase family. Tpsb subfamily. It depends on Mg(2+) as a cofactor. The cofactor is Mn(2+).

The catalysed reaction is (2E,6E)-farnesyl diphosphate = alpha-humulene + diphosphate. It catalyses the reaction (2E,6E)-farnesyl diphosphate = (+)-valencene + diphosphate. The enzyme catalyses (2E)-geranyl diphosphate = beta-myrcene + diphosphate. It carries out the reaction (2E,6E)-farnesyl diphosphate = allo-aromadendrene + diphosphate. The catalysed reaction is (2E,6E)-farnesyl diphosphate + H2O = palustrol + diphosphate. The protein operates within secondary metabolite biosynthesis; terpenoid biosynthesis. Involved in sesquiterpene olefins biosynthesis, constituants of cannabinoids and terpenoids-rich resins. Catalyzes mainly the conversion of (2E)-farnesyl diphosphate to allo-aromadendrene, and also produces minor products such as alpha-humulene, valencene and palustrol. Can also use (2E)-geranyl diphosphate as substrate with low efficiency, producing minor amounts of myrcene. The protein is Allo-aromadendrene synthase TPS4FN of Cannabis sativa (Hemp).